Here is a 511-residue protein sequence, read N- to C-terminus: 2,3-bisphosphoglycerate-independent phosphoglycerate mutase (511 aa).

Residue Asp-12 participates in Mn(2+) binding. Tyr-36 carries the phosphotyrosine modification. Ser-62 is a binding site for Mn(2+). Ser-62 acts as the Phosphoserine intermediate in catalysis. Substrate contacts are provided by residues His-123, Arg-153–Asp-154, Arg-185, Arg-191, Arg-261–Arg-264, and Lys-336. Mn(2+) is bound by residues Asp-403, His-407, Asp-444, His-445, and His-462.

It belongs to the BPG-independent phosphoglycerate mutase family. As to quaternary structure, monomer. Mn(2+) is required as a cofactor.

The catalysed reaction is (2R)-2-phosphoglycerate = (2R)-3-phosphoglycerate. It functions in the pathway carbohydrate degradation; glycolysis; pyruvate from D-glyceraldehyde 3-phosphate: step 3/5. Its function is as follows. Catalyzes the interconversion of 2-phosphoglycerate and 3-phosphoglycerate. The polypeptide is 2,3-bisphosphoglycerate-independent phosphoglycerate mutase (Geobacillus thermodenitrificans (strain NG80-2)).